The following is a 363-amino-acid chain: Chorismate synthase (363 aa).

NADP(+)-binding residues include Arg47 and Arg53. Residues 124 to 126 (RSS), Gly286, 301 to 305 (KPTAT), and Arg327 each bind FMN.

Belongs to the chorismate synthase family. In terms of assembly, homotetramer. Requires FMNH2 as cofactor.

The catalysed reaction is 5-O-(1-carboxyvinyl)-3-phosphoshikimate = chorismate + phosphate. It participates in metabolic intermediate biosynthesis; chorismate biosynthesis; chorismate from D-erythrose 4-phosphate and phosphoenolpyruvate: step 7/7. Functionally, catalyzes the anti-1,4-elimination of the C-3 phosphate and the C-6 proR hydrogen from 5-enolpyruvylshikimate-3-phosphate (EPSP) to yield chorismate, which is the branch point compound that serves as the starting substrate for the three terminal pathways of aromatic amino acid biosynthesis. This reaction introduces a second double bond into the aromatic ring system. The chain is Chorismate synthase from Thermosynechococcus vestitus (strain NIES-2133 / IAM M-273 / BP-1).